Reading from the N-terminus, the 103-residue chain is Co-chaperonin GroES (103 aa).

The protein belongs to the GroES chaperonin family. In terms of assembly, heptamer of 7 subunits arranged in a ring. Interacts with the chaperonin GroEL.

It localises to the cytoplasm. In terms of biological role, together with the chaperonin GroEL, plays an essential role in assisting protein folding. The GroEL-GroES system forms a nano-cage that allows encapsulation of the non-native substrate proteins and provides a physical environment optimized to promote and accelerate protein folding. GroES binds to the apical surface of the GroEL ring, thereby capping the opening of the GroEL channel. In Nostoc punctiforme (strain ATCC 29133 / PCC 73102), this protein is Co-chaperonin GroES.